We begin with the raw amino-acid sequence, 322 residues long: Transaldolase (322 aa).

Catalysis depends on Lys132, which acts as the Schiff-base intermediate with substrate.

Belongs to the transaldolase family. Type 1 subfamily. Homodimer.

Its subcellular location is the cytoplasm. It catalyses the reaction D-sedoheptulose 7-phosphate + D-glyceraldehyde 3-phosphate = D-erythrose 4-phosphate + beta-D-fructose 6-phosphate. The protein operates within carbohydrate degradation; pentose phosphate pathway; D-glyceraldehyde 3-phosphate and beta-D-fructose 6-phosphate from D-ribose 5-phosphate and D-xylulose 5-phosphate (non-oxidative stage): step 2/3. Its function is as follows. Transaldolase is important for the balance of metabolites in the pentose-phosphate pathway. The chain is Transaldolase from Protochlamydia amoebophila (strain UWE25).